Reading from the N-terminus, the 70-residue chain is DNA-directed RNA polymerase subunit epsilon (70 aa).

Belongs to the RNA polymerase subunit epsilon family. RNAP is composed of a core of 2 alpha, a beta and a beta' subunit. The core is associated with a delta subunit, and at least one of epsilon or omega. When a sigma factor is associated with the core the holoenzyme is formed, which can initiate transcription.

It carries out the reaction RNA(n) + a ribonucleoside 5'-triphosphate = RNA(n+1) + diphosphate. A non-essential component of RNA polymerase (RNAP). The protein is DNA-directed RNA polymerase subunit epsilon of Leuconostoc mesenteroides subsp. mesenteroides (strain ATCC 8293 / DSM 20343 / BCRC 11652 / CCM 1803 / JCM 6124 / NCDO 523 / NBRC 100496 / NCIMB 8023 / NCTC 12954 / NRRL B-1118 / 37Y).